A 359-amino-acid polypeptide reads, in one-letter code: Src kinase-associated phosphoprotein 2 (359 aa).

Ser5, Ser6, and Ser9 each carry phosphoserine. Residues 67-88 (GDAEDGEEYDDPFAGPPDTISL) form a disordered region. Position 75 is a phosphotyrosine (Tyr75). Phosphoserine occurs at positions 87 and 90. In terms of domain architecture, PH spans 116-219 (FVLKAGYLEK…WVQQLKFVLQ (104 aa)). Phosphotyrosine occurs at positions 151 and 197. Residue Ser223 is modified to Phosphoserine. Position 261 is a phosphotyrosine (Tyr261). A Phosphoserine modification is found at Ser286. The region spanning 297 to 358 (DYANFYQGLW…PKAYIMEMYD (62 aa)) is the SH3 domain.

Belongs to the SKAP family. As to quaternary structure, interacts with FYB1, which is required for SKAP2 protein stability. Interacts with PTPNS1. Part of a complex consisting of SKAP2, FYB1 and PTPNS1. Part of a complex consisting of SKAP2, FYB1 and LILRB3. Interacts with LAT, GRB2, PTK2B, and PRAM1. May interact with actin. May interact with FYN, HCK and LYN. Interacts with FASLG.

Its subcellular location is the cytoplasm. May be involved in B-cell and macrophage adhesion processes. In B-cells, may act by coupling the B-cell receptor (BCR) to integrin activation. May play a role in src signaling pathway. This is Src kinase-associated phosphoprotein 2 (SKAP2) from Pongo abelii (Sumatran orangutan).